The chain runs to 36 residues: Omega-agatoxin-Aa1b (36 aa).

The protein belongs to the neurotoxin 04 (omega-agtx) family. 01 (type I omega-agtx) subfamily. As to expression, expressed by the venom gland.

The protein localises to the secreted. Functionally, omega-agatoxin are antagonist of voltage-gated calcium channels. They block insect neuromuscular transmission presynaptically. This toxin is a blocker of L-type calcium channels (Cav/CACNA1). In Agelenopsis aperta (North American funnel-web spider), this protein is Omega-agatoxin-Aa1b.